A 311-amino-acid polypeptide reads, in one-letter code: Tyrosine recombinase XerD (311 aa).

In terms of domain architecture, Core-binding (CB) spans 2 to 95; the sequence is KTLALQLQGY…AVRGLHRFAA (94 aa). The Tyr recombinase domain maps to 116-304; that stretch reads RLPKSLTIDE…TVHALREVWA (189 aa). Catalysis depends on residues Arg-160, Lys-184, His-256, Arg-259, and His-282. Tyr-291 functions as the O-(3'-phospho-DNA)-tyrosine intermediate in the catalytic mechanism.

Belongs to the 'phage' integrase family. XerD subfamily. As to quaternary structure, forms a cyclic heterotetrameric complex composed of two molecules of XerC and two molecules of XerD.

The protein localises to the cytoplasm. Site-specific tyrosine recombinase, which acts by catalyzing the cutting and rejoining of the recombining DNA molecules. The XerC-XerD complex is essential to convert dimers of the bacterial chromosome into monomers to permit their segregation at cell division. It also contributes to the segregational stability of plasmids. The protein is Tyrosine recombinase XerD of Mycobacterium tuberculosis (strain CDC 1551 / Oshkosh).